The chain runs to 229 residues: Translation initiation factor IF-3 (229 aa).

2 disordered regions span residues 1–21 and 184–229; these read MAIQ…TNRR and QAQR…AGPR. Residues 192 to 203 show a composition bias toward low complexity; it reads AAAQAAPAAAPQ. The span at 204–221 shows a compositional bias: pro residues; the sequence is PGAPAAPPAAPAPAPAPE.

The protein belongs to the IF-3 family. Monomer.

The protein resides in the cytoplasm. IF-3 binds to the 30S ribosomal subunit and shifts the equilibrium between 70S ribosomes and their 50S and 30S subunits in favor of the free subunits, thus enhancing the availability of 30S subunits on which protein synthesis initiation begins. This chain is Translation initiation factor IF-3, found in Anaeromyxobacter sp. (strain Fw109-5).